Consider the following 336-residue polypeptide: Dihydroorotate dehydrogenase (quinone) (336 aa).

FMN-binding positions include 62-66 and Thr-86; that span reads AGLDK. Lys-66 contributes to the substrate binding site. A substrate-binding site is contributed by 111-115; the sequence is NRMGF. Asn-139 and Asn-172 together coordinate FMN. Asn-172 contributes to the substrate binding site. Ser-175 serves as the catalytic Nucleophile. Asn-177 contacts substrate. FMN is bound by residues Lys-217 and Thr-245. Substrate is bound at residue 246 to 247; that stretch reads NT. FMN-binding positions include Gly-268, Gly-297, and 318–319; that span reads YS.

This sequence belongs to the dihydroorotate dehydrogenase family. Type 2 subfamily. In terms of assembly, monomer. FMN is required as a cofactor.

The protein localises to the cell membrane. It catalyses the reaction (S)-dihydroorotate + a quinone = orotate + a quinol. It participates in pyrimidine metabolism; UMP biosynthesis via de novo pathway; orotate from (S)-dihydroorotate (quinone route): step 1/1. Catalyzes the conversion of dihydroorotate to orotate with quinone as electron acceptor. The sequence is that of Dihydroorotate dehydrogenase (quinone) from Klebsiella pneumoniae (strain 342).